Here is a 106-residue protein sequence, read N- to C-terminus: Large ribosomal subunit protein uL24 (106 aa).

Basic and acidic residues predominate over residues 84 to 97; sequence EKIGRELGAKEKAR. Residues 84 to 106 are disordered; sequence EKIGRELGAKEKARLQKRKTAAK.

This sequence belongs to the universal ribosomal protein uL24 family. Part of the 50S ribosomal subunit.

One of two assembly initiator proteins, it binds directly to the 5'-end of the 23S rRNA, where it nucleates assembly of the 50S subunit. Its function is as follows. One of the proteins that surrounds the polypeptide exit tunnel on the outside of the subunit. This Anaeromyxobacter dehalogenans (strain 2CP-1 / ATCC BAA-258) protein is Large ribosomal subunit protein uL24.